A 63-amino-acid chain; its full sequence is UPF0370 protein ECA1289 (63 aa).

The chain crosses the membrane as a helical span at residues 3–23; sequence WLADYWWIILIILIGMLINGI. The interval 39–63 is disordered; that stretch reads PKLPPHRDNNDKWDNEEDDWPKKKP.

This sequence belongs to the UPF0370 family.

Its subcellular location is the cell membrane. This is UPF0370 protein ECA1289 from Pectobacterium atrosepticum (strain SCRI 1043 / ATCC BAA-672) (Erwinia carotovora subsp. atroseptica).